The primary structure comprises 315 residues: C1GALT1-specific chaperone 1-like protein (315 aa).

Residues 1–8 (MVSASGTS) lie on the Cytoplasmic side of the membrane. Residues 9-29 (FFKGMLLGSISWVLITMFGQI) form a helical; Signal-anchor for type II membrane protein membrane-spanning segment. Residues 30–315 (HIRHRGQTQD…FLPPVGSEND (286 aa)) lie on the Lumenal side of the membrane. N55 and N301 each carry an N-linked (GlcNAc...) asparagine glycan.

Belongs to the glycosyltransferase 31 family. Beta3-Gal-T subfamily.

It localises to the membrane. This Homo sapiens (Human) protein is C1GALT1-specific chaperone 1-like protein.